We begin with the raw amino-acid sequence, 295 residues long: Probable peptidyl-prolyl cis-trans isomerase B (295 aa).

Disordered stretches follow at residues 105-128 (SADKAAKPVKPPRAGKVPTDPATV) and 274-295 (IASGGDDGPPATEVTIESLRLD). Residues 126 to 294 (ATVSASMATN…TEVTIESLRL (169 aa)) form the PPIase cyclophilin-type domain.

This sequence belongs to the cyclophilin-type PPIase family.

It catalyses the reaction [protein]-peptidylproline (omega=180) = [protein]-peptidylproline (omega=0). In terms of biological role, PPIases accelerate the folding of proteins. It catalyzes the cis-trans isomerization of proline imidic peptide bonds in oligopeptides. The chain is Probable peptidyl-prolyl cis-trans isomerase B (ppiB) from Mycobacterium leprae (strain TN).